We begin with the raw amino-acid sequence, 349 residues long: Fe(3+) ions import ATP-binding protein FbpC (349 aa).

Residues 4–236 (LELHHIGKSY…PVDEPTATFL (233 aa)) form the ABC transporter domain. 36–43 (GPSGSGKT) is an ATP binding site.

Belongs to the ABC transporter superfamily. Fe(3+) ion importer (TC 3.A.1.10) family. The complex is composed of two ATP-binding proteins (FbpC), two transmembrane proteins (FbpB) and a solute-binding protein (FbpA).

The protein localises to the cell inner membrane. The enzyme catalyses Fe(3+)(out) + ATP + H2O = Fe(3+)(in) + ADP + phosphate + H(+). In terms of biological role, part of the ABC transporter complex FbpABC involved in Fe(3+) ions import. Responsible for energy coupling to the transport system. The chain is Fe(3+) ions import ATP-binding protein FbpC from Yersinia pseudotuberculosis serotype I (strain IP32953).